Consider the following 1331-residue polypeptide: ABC multidrug transporter MDR2 (1331 aa).

A disordered region spans residues 1 to 50; the sequence is MVEPSEKPNTQNDDVSKQEIRNPVSSSSSTSDKEKVAKKGNSDATKSLTP. A compositionally biased stretch (basic and acidic residues) spans 31-41; sequence SDKEKVAKKGN. The next 4 helical transmembrane spans lie at 93-113, 147-167, 219-239, and 242-262; these read MILL…LPLF, YFVY…VGFI, KVGL…IGYV, and WKLA…MGGI. The region spanning 97–387 is the ABC transmembrane type-1 1 domain; that stretch reads AIVSLASIAA…VAPNTQAFAS (291 aa). N-linked (GlcNAc...) asparagine glycosylation is present at N293. The next 2 helical transmembrane spans lie at 325 to 345 and 358 to 378; these read LGIM…LGFW and LSAI…IGNV. Positions 422 to 667 constitute an ABC transporter 1 domain; that stretch reads IEFRGIKHIY…KGTYLQLVEA (246 aa). 457 to 464 contacts ATP; it reads GPSGSGKS. A glycan (N-linked (GlcNAc...) asparagine) is linked at N529. Helical transmembrane passes span 762 to 782 and 808 to 828; these read LCGF…SVFF and LMFL…GVIF. One can recognise an ABC transmembrane type-1 2 domain in the interval 764–1051; the sequence is GFFFAVLSGA…VFSFSPDMGK (288 aa). N860 carries an N-linked (GlcNAc...) asparagine glycan. 4 helical membrane-spanning segments follow: residues 884-904, 910-930, 995-1015, and 1025-1045; these read LGTI…ALAF, LVCI…FWIL, ASQS…GGLL, and FFLC…VFSF. Residues 1086–1324 form the ABC transporter 2 domain; it reads IEFRDVHFRY…KGRYYELVHM (239 aa). N1108 carries an N-linked (GlcNAc...) asparagine glycan. 1121–1128 contributes to the ATP binding site; that stretch reads GPSGCGKS.

Belongs to the ABC transporter superfamily. ABCB family. Multidrug resistance exporter (TC 3.A.1.201) subfamily.

The protein resides in the cell membrane. The enzyme catalyses itraconazole(in) + ATP + H2O = itraconazole(out) + ADP + phosphate + H(+). Its function is as follows. ABC-type efflux transporter involved in the modulation susceptibility to itraconazole. This chain is ABC multidrug transporter MDR2, found in Trichophyton rubrum (strain ATCC MYA-4607 / CBS 118892) (Athlete's foot fungus).